The chain runs to 282 residues: Acetylglutamate kinase (282 aa).

Residues 62 to 63 (GG), arginine 84, and asparagine 178 contribute to the substrate site.

It belongs to the acetylglutamate kinase family. ArgB subfamily.

The protein resides in the cytoplasm. It carries out the reaction N-acetyl-L-glutamate + ATP = N-acetyl-L-glutamyl 5-phosphate + ADP. It functions in the pathway amino-acid biosynthesis; L-arginine biosynthesis; N(2)-acetyl-L-ornithine from L-glutamate: step 2/4. Catalyzes the ATP-dependent phosphorylation of N-acetyl-L-glutamate. The sequence is that of Acetylglutamate kinase from Kosmotoga olearia (strain ATCC BAA-1733 / DSM 21960 / TBF 19.5.1).